The following is a 425-amino-acid chain: E3 ubiquitin-protein ligase CBLL2 (425 aa).

Residues 57–97 form an RING-type zinc finger; sequence CDKCDLPIKIYGRIIPCKHAFCYHCANLYDKVGYKVCPRCR. The tract at residues 96–154 is HYB domain; it reads CRYPVLRIEAHKRGSVFMCSIVQQCKRTYLSQKSLQAHIKRRHKRARKQVTSASLEKVR. The segment at 112-138 adopts a C2H2-type zinc-finger fold; the sequence is FMCSIVQQCKRTYLSQKSLQAHIKRRH. Disordered stretches follow at residues 241-297 and 382-425; these read DHIQ…HQMP and TDAM…HRRY. Residues 398-408 are compositionally biased toward pro residues; it reads PCPPTRSPPPS. The segment covering 412–425 has biased composition (basic residues); that stretch reads GRSHHSHQRRHRRY.

In terms of assembly, homodimer. As to expression, exclusively expressed in testis and sperm, including spermatocytes, round and elongated spermatids, and Leydig cells.

It is found in the cytoplasm. It catalyses the reaction S-ubiquitinyl-[E2 ubiquitin-conjugating enzyme]-L-cysteine + [acceptor protein]-L-lysine = [E2 ubiquitin-conjugating enzyme]-L-cysteine + N(6)-ubiquitinyl-[acceptor protein]-L-lysine.. It participates in protein modification; protein ubiquitination. Its function is as follows. E3 ubiquitin ligase catalyzing the covalent attachment of ubiquitin moieties onto substrate proteins. May operate on tyrosine-phosphorylated SRC substrates. This Homo sapiens (Human) protein is E3 ubiquitin-protein ligase CBLL2.